A 665-amino-acid polypeptide reads, in one-letter code: MYSRKELANAIRMLSIDAVQNAQSGHPGMPMGMADIAEVLWRSFLKHNPANPNWNDRDRFILSNGHGSMLLYSLLHLTGYNLPIEELKKFRQLNSKTPGHPETGETPGVETTTGPLGQGLANAVGMAIAERTLSSYFNRPGYDIINHYTWVFVGDGCLMEGISHEVCSLAGTLNLGKLIVFYDKNGISIDGKTAHWFTDDTAKRFESYNWHVLDNIDGHDSESIERSIKQAKLITNQPSIIICNTIIGFGSPNKSGTAESHGAPLGEVEISLIREQLKWNYPPFQIPKEIYKKWNFIEEGSKLEKKWNEKFSLYQSKYPDLSTEYLRRINKKLPVEWDRVTNNYISFLQKNRQSIASRKASQNTLEKYAMILPELIGGSADLSPSNLTMWSRCNSIKDNLSGNYIHYGVREFGMTAIANGISHHGGFIPYTATFLMFVEYARNAVRMAALMCTKHIFVYTHDSIGLGEDGPTHQPVEQLSSLRITPNIDVWRPSDQVETAVAWKKAIEKTSGPTALILSRQNLDQFERSSEQLENISYGAYILYDSKKRLDIIFISTGSELNVTLIAAKKLASLGYSVRVVSMPCTSVFDRQDASYKEFVLPTYVAKRVAVEASIEDFWYKYVGINGVIIGMKTFGESAPAEDLFKKFGFTVQNIFNKSLILLKS.

Histidine 26 is a binding site for substrate. Thiamine diphosphate-binding positions include histidine 66 and 114–116 (GPL). A disordered region spans residues 94 to 114 (NSKTPGHPETGETPGVETTTG). Residues 97–114 (TPGHPETGETPGVETTTG) show a composition bias toward low complexity. A Mg(2+)-binding site is contributed by aspartate 155. Thiamine diphosphate contacts are provided by glycine 156 and asparagine 185. Mg(2+) is bound by residues asparagine 185 and isoleucine 187. Substrate contacts are provided by histidine 261, arginine 358, and serine 385. Histidine 261 contacts thiamine diphosphate. Glutamate 411 acts as the Proton donor in catalysis. Residue phenylalanine 437 coordinates thiamine diphosphate. Residues histidine 461, aspartate 469, and arginine 520 each coordinate substrate.

Belongs to the transketolase family. Homodimer. Mg(2+) serves as cofactor. It depends on Ca(2+) as a cofactor. Requires Mn(2+) as cofactor. The cofactor is Co(2+). Thiamine diphosphate is required as a cofactor.

The enzyme catalyses D-sedoheptulose 7-phosphate + D-glyceraldehyde 3-phosphate = aldehydo-D-ribose 5-phosphate + D-xylulose 5-phosphate. Catalyzes the transfer of a two-carbon ketol group from a ketose donor to an aldose acceptor, via a covalent intermediate with the cofactor thiamine pyrophosphate. The sequence is that of Transketolase (tkt) from Buchnera aphidicola subsp. Acyrthosiphon pisum (strain APS) (Acyrthosiphon pisum symbiotic bacterium).